The following is a 98-amino-acid chain: NADH-ubiquinone oxidoreductase chain 4L (98 aa).

Transmembrane regions (helical) follow at residues 2-22 (PSISTNIILAFITALLGMLIF), 29-49 (SLLCLEGMMLSMFILSTLTIL), and 61-81 (ILLLVFAACEAAVGLALLVTV).

The protein belongs to the complex I subunit 4L family. As to quaternary structure, core subunit of respiratory chain NADH dehydrogenase (Complex I) which is composed of 45 different subunits.

It localises to the mitochondrion inner membrane. The enzyme catalyses a ubiquinone + NADH + 5 H(+)(in) = a ubiquinol + NAD(+) + 4 H(+)(out). Core subunit of the mitochondrial membrane respiratory chain NADH dehydrogenase (Complex I) which catalyzes electron transfer from NADH through the respiratory chain, using ubiquinone as an electron acceptor. Part of the enzyme membrane arm which is embedded in the lipid bilayer and involved in proton translocation. The chain is NADH-ubiquinone oxidoreductase chain 4L (MT-ND4L) from Eulemur coronatus (Crowned lemur).